The primary structure comprises 107 residues: RecQ-mediated genome instability protein 2 homolog (107 aa).

The protein belongs to the RMI2 family. Component of the RMI complex, containing at least top-3, rmh-1 and rmh-2. Component of the BTR double Holliday Junction dissolution complex composed of at least him-6, top-3, rmh-1 and rmif-2, which is involved in double strand break repair in the germline. Interacts with rmh-1; the interaction is direct and is required for mutual stability and localization at nuclear foci. As to expression, expressed in the germline.

It is found in the nucleus. Functionally, essential component of the RMI complex, a complex that plays an important role in the processing of homologous recombination intermediates. Component of the BTR double Holliday Junction dissolution complex, which is involved in homologous recombination during meiotic double strand break in the germline. Plays a role in double strand break repair by positively regulating the accumulation of rad-51 at double strand breaks. Stabilizes and positively regulates the localization of the BTR double Holliday Junction dissolution complex components rmh-1, him-6 and top-3 at nuclear foci during meiotic recombination. Positively regulates meiotic recombination, chiasma formation, and chromosome segregation in meiosis. Positively regulates DNA crossover formation and positioning on chromosome arms (away from the chromosome center) during homologous recombination. The polypeptide is RecQ-mediated genome instability protein 2 homolog (Caenorhabditis elegans).